Consider the following 256-residue polypeptide: uncharacterized protein (256 aa).

The first 24 residues, 1 to 24 (MIKRVNKLVLGISFLFLIISIFAG), serve as a signal peptide directing secretion. Residue Cys25 is the site of N-palmitoyl cysteine attachment. Cys25 carries S-diacylglycerol cysteine lipidation.

It belongs to the staphylococcal tandem lipoprotein family.

It is found in the cell membrane. This is an uncharacterized protein from Staphylococcus aureus (strain Mu50 / ATCC 700699).